The sequence spans 284 residues: Nucleotide-binding protein VF_0384 (284 aa).

8-15 (GSSGAGKS) is a binding site for ATP. 56–59 (DIRN) lines the GTP pocket.

This sequence belongs to the RapZ-like family.

Functionally, displays ATPase and GTPase activities. The protein is Nucleotide-binding protein VF_0384 of Aliivibrio fischeri (strain ATCC 700601 / ES114) (Vibrio fischeri).